The primary structure comprises 438 residues: Xylose isomerase (438 aa).

Positions 306 and 308 each coordinate Mg(2+).

This sequence belongs to the xylose isomerase family. As to quaternary structure, homotetramer. Mg(2+) is required as a cofactor.

The protein resides in the cytoplasm. The catalysed reaction is alpha-D-xylose = alpha-D-xylulofuranose. This is Xylose isomerase from Pseudomonas fluorescens (strain SBW25).